We begin with the raw amino-acid sequence, 100 residues long: Aspartyl/glutamyl-tRNA(Asn/Gln) amidotransferase subunit C (100 aa).

It belongs to the GatC family. In terms of assembly, heterotrimer of A, B and C subunits.

It carries out the reaction L-glutamyl-tRNA(Gln) + L-glutamine + ATP + H2O = L-glutaminyl-tRNA(Gln) + L-glutamate + ADP + phosphate + H(+). The catalysed reaction is L-aspartyl-tRNA(Asn) + L-glutamine + ATP + H2O = L-asparaginyl-tRNA(Asn) + L-glutamate + ADP + phosphate + 2 H(+). Functionally, allows the formation of correctly charged Asn-tRNA(Asn) or Gln-tRNA(Gln) through the transamidation of misacylated Asp-tRNA(Asn) or Glu-tRNA(Gln) in organisms which lack either or both of asparaginyl-tRNA or glutaminyl-tRNA synthetases. The reaction takes place in the presence of glutamine and ATP through an activated phospho-Asp-tRNA(Asn) or phospho-Glu-tRNA(Gln). This Rickettsia peacockii (strain Rustic) protein is Aspartyl/glutamyl-tRNA(Asn/Gln) amidotransferase subunit C.